Here is a 68-residue protein sequence, read N- to C-terminus: DNA gyrase inhibitor YacG (68 aa).

Residues C10, C13, C29, and C33 each contribute to the Zn(2+) site. The interval 45–68 is disordered; that stretch reads EKRIPSDTELSDSDEWSEEDPLKH. Residues 53 to 68 show a composition bias toward acidic residues; that stretch reads ELSDSDEWSEEDPLKH.

Belongs to the DNA gyrase inhibitor YacG family. In terms of assembly, interacts with GyrB. The cofactor is Zn(2+).

Functionally, inhibits all the catalytic activities of DNA gyrase by preventing its interaction with DNA. Acts by binding directly to the C-terminal domain of GyrB, which probably disrupts DNA binding by the gyrase. In Yersinia pseudotuberculosis serotype O:1b (strain IP 31758), this protein is DNA gyrase inhibitor YacG.